A 780-amino-acid polypeptide reads, in one-letter code: Calpain clp-1 (780 aa).

Over residues 269–282 (DVDPFVRPGPDPDR) the composition is skewed to basic and acidic residues. The interval 269-300 (DVDPFVRPGPDPDRGGGGSGPSPISPRPTTEP) is disordered. The Calpain catalytic domain occupies 316–611 (LFEDPQFLAN…FEKMEICNLG (296 aa)). Residues C371, H527, and N551 contribute to the active site.

Belongs to the peptidase C2 family. Expressed in muscle and neuronal tissues. Expressed in the ventral and dorsal nerve cord, intestinal and hypodermal tissues.

Its subcellular location is the cytoplasm. It is found in the myofibril. The protein localises to the sarcomere. It localises to the m line. Calcium-regulated non-lysosomal thiol-protease which catalyzes limited proteolysis of substrates. Required for assembly and maintenance of integrin attachment complexes which are essential for maintenance of adult muscle. Proteolytic activity is activated in response to increased intracellular Ca(2+) levels during cell degeneration and promotes necrotic cell death. The protein is Calpain clp-1 of Caenorhabditis elegans.